The primary structure comprises 276 residues: Pantothenate synthetase (276 aa).

Position 27 to 34 (27 to 34 (MGALHKGH)) interacts with ATP. The Proton donor role is filled by His34. Gln58 is a (R)-pantoate binding site. Residue Gln58 coordinates beta-alanine. Residue 147–150 (GKKD) coordinates ATP. Position 153 (Gln153) interacts with (R)-pantoate. Residues Val176 and 184 to 187 (LSSR) each bind ATP.

Belongs to the pantothenate synthetase family. As to quaternary structure, homodimer.

The protein resides in the cytoplasm. It carries out the reaction (R)-pantoate + beta-alanine + ATP = (R)-pantothenate + AMP + diphosphate + H(+). Its pathway is cofactor biosynthesis; (R)-pantothenate biosynthesis; (R)-pantothenate from (R)-pantoate and beta-alanine: step 1/1. Functionally, catalyzes the condensation of pantoate with beta-alanine in an ATP-dependent reaction via a pantoyl-adenylate intermediate. This Helicobacter pylori (strain ATCC 700392 / 26695) (Campylobacter pylori) protein is Pantothenate synthetase.